We begin with the raw amino-acid sequence, 366 residues long: MNFSTYFENLSVPNNISGNITFPISEDCALPLPMIFTLALAYGAVIILGLSGNLALIIIILKQKEMRNVTNILIVNLSFSDLLATIMCLPFTLIYTLMDHWIFGEVMCKLNEYIQCVSVTVSIFSLVLIAIERHQLIINPRGWRPNNRHACFGITVIWGFAMACSTPLMMYSVLTDEPFKNISLDSYIGKYVCLEDFPEDKFRLSYTTLLFILQYLGPLCFIFVCYTKIFLRLKRRNNMMDKIRDNKYRSSETKRINIMLLSIVVGFALCWLPFFIFNLVFDWNHEAVATCNHNLLFLICHLTAMISTCVNPIFYGFLNKNFQRDLQFFFNFCDFRSREDDYETIAMSTMHTDVSKTSLKQASPIA.

Over 1–39 (MNFSTYFENLSVPNNISGNITFPISEDCALPLPMIFTLA) the chain is Extracellular. Asparagine 2, asparagine 9, and asparagine 15 each carry an N-linked (GlcNAc...) asparagine glycan. A helical membrane pass occupies residues 40-60 (LAYGAVIILGLSGNLALIIII). The Cytoplasmic portion of the chain corresponds to 61–82 (LKQKEMRNVTNILIVNLSFSDL). Residues 83-103 (LATIMCLPFTLIYTLMDHWIF) form a helical membrane-spanning segment. Topologically, residues 104–111 (GEVMCKLN) are extracellular. A disulfide bond links cysteine 108 and cysteine 193. Residues 112–132 (EYIQCVSVTVSIFSLVLIAIE) form a helical membrane-spanning segment. Topologically, residues 133 to 149 (RHQLIINPRGWRPNNRH) are cytoplasmic. A helical transmembrane segment spans residues 150-170 (ACFGITVIWGFAMACSTPLMM). Over 171 to 203 (YSVLTDEPFKNISLDSYIGKYVCLEDFPEDKFR) the chain is Extracellular. Asparagine 181 is a glycosylation site (N-linked (GlcNAc...) asparagine). A helical membrane pass occupies residues 204-224 (LSYTTLLFILQYLGPLCFIFV). Topologically, residues 225–260 (CYTKIFLRLKRRNNMMDKIRDNKYRSSETKRINIML) are cytoplasmic. Residues 261-281 (LSIVVGFALCWLPFFIFNLVF) traverse the membrane as a helical segment. Residues 282 to 294 (DWNHEAVATCNHN) are Extracellular-facing. The helical transmembrane segment at 295-315 (LLFLICHLTAMISTCVNPIFY) threads the bilayer. The Cytoplasmic portion of the chain corresponds to 316–366 (GFLNKNFQRDLQFFFNFCDFRSREDDYETIAMSTMHTDVSKTSLKQASPIA). Cysteine 333 carries the S-palmitoyl cysteine lipid modification.

It belongs to the G-protein coupled receptor 1 family.

Its subcellular location is the cell membrane. Its function is as follows. Receptor for neuropeptide Y and peptide YY. This is Neuropeptide Y receptor type 1 (npy1r) from Xenopus laevis (African clawed frog).